The chain runs to 546 residues: Probable protein kinase UbiB (546 aa).

The Protein kinase domain occupies 123–501 (DFQEIPLASA…RTNHGQALFL (379 aa)). ATP contacts are provided by residues 129-137 (LASASISQV) and Lys-152. Residue Asp-287 is the Proton acceptor of the active site. The next 2 membrane-spanning stretches (helical) occupy residues 497–517 (QALFLFGVGATLVTSSIFLYI) and 521–541 (YLKIFSIFLFVIGIFIWTIGW).

Belongs to the ABC1 family. UbiB subfamily.

Its subcellular location is the cell inner membrane. Its pathway is cofactor biosynthesis; ubiquinone biosynthesis [regulation]. Its function is as follows. Is probably a protein kinase regulator of UbiI activity which is involved in aerobic coenzyme Q (ubiquinone) biosynthesis. The chain is Probable protein kinase UbiB from Blochmanniella pennsylvanica (strain BPEN).